A 125-amino-acid polypeptide reads, in one-letter code: Calcitonin receptor-stimulating peptide 1 (125 aa).

An N-terminal signal peptide occupies residues 1 to 25; sequence MGFWKFPPFLVLSILVLYQAGMFHA. The propeptide occupies 26–77; the sequence is APFRSVFDGRFDPATLDEEESRLLLAAMVNDYEQMRARESEKAQKTEGSRIQ. An intrachain disulfide couples Cys81 to Cys86.

This sequence belongs to the calcitonin family.

It is found in the secreted. Its function is as follows. Stimulates cAMP production in porcine kidney cell line LLC-PK1 via the calcitonin receptor (CT) but not via the CT-like (CL) receptor. In Bos taurus (Bovine), this protein is Calcitonin receptor-stimulating peptide 1 (CRSP1).